Reading from the N-terminus, the 358-residue chain is Pyruvate dehydrogenase E1 component subunit alpha (358 aa).

As to quaternary structure, heterodimer of an alpha and a beta chain. The cofactor is thiamine diphosphate.

It catalyses the reaction N(6)-[(R)-lipoyl]-L-lysyl-[protein] + pyruvate + H(+) = N(6)-[(R)-S(8)-acetyldihydrolipoyl]-L-lysyl-[protein] + CO2. In terms of biological role, the pyruvate dehydrogenase complex catalyzes the overall conversion of pyruvate to acetyl-CoA and CO(2). It contains multiple copies of three enzymatic components: pyruvate dehydrogenase (E1), dihydrolipoamide acetyltransferase (E2) and lipoamide dehydrogenase (E3). The protein is Pyruvate dehydrogenase E1 component subunit alpha (pdhA) of Mycoplasma pneumoniae (strain ATCC 29342 / M129 / Subtype 1) (Mycoplasmoides pneumoniae).